The following is a 483-amino-acid chain: Altronate oxidoreductase (483 aa).

An NAD(+)-binding site is contributed by 18–29 (IIQFGEGNFLRA).

It belongs to the mannitol dehydrogenase family. UxaB subfamily.

It catalyses the reaction D-altronate + NAD(+) = keto-D-tagaturonate + NADH + H(+). The protein operates within carbohydrate metabolism; pentose and glucuronate interconversion. The polypeptide is Altronate oxidoreductase (Klebsiella pneumoniae (strain 342)).